Consider the following 308-residue polypeptide: Protein translocase subunit SecF (308 aa).

Helical transmembrane passes span 12 to 32, 127 to 147, 152 to 172, 182 to 202, 234 to 254, and 262 to 282; these read YFIF…TKGF, AKNA…YITI, IYAL…IGFI, PFIA…IVIF, VYTS…GGST, and LLVG…PLVY.

Belongs to the SecD/SecF family. SecF subfamily. In terms of assembly, forms a complex with SecD. Part of the essential Sec protein translocation apparatus which comprises SecA, SecYEG and auxiliary proteins SecDF. Other proteins may also be involved.

The protein resides in the cell inner membrane. Part of the Sec protein translocase complex. Interacts with the SecYEG preprotein conducting channel. SecDF uses the proton motive force (PMF) to complete protein translocation after the ATP-dependent function of SecA. The protein is Protein translocase subunit SecF of Sebaldella termitidis (strain ATCC 33386 / NCTC 11300).